Consider the following 59-residue polypeptide: Large ribosomal subunit protein bL32B (59 aa).

This sequence belongs to the bacterial ribosomal protein bL32 family.

The chain is Large ribosomal subunit protein bL32B (rpmF2) from Enterococcus faecalis (strain ATCC 700802 / V583).